The sequence spans 523 residues: Bifunctional purine biosynthesis protein PurH (523 aa).

One can recognise an MGS-like domain in the interval 4–152 (DHIRRPIRRA…KNHPSVAVVT (149 aa)).

The protein belongs to the PurH family.

The catalysed reaction is (6R)-10-formyltetrahydrofolate + 5-amino-1-(5-phospho-beta-D-ribosyl)imidazole-4-carboxamide = 5-formamido-1-(5-phospho-D-ribosyl)imidazole-4-carboxamide + (6S)-5,6,7,8-tetrahydrofolate. It carries out the reaction IMP + H2O = 5-formamido-1-(5-phospho-D-ribosyl)imidazole-4-carboxamide. It participates in purine metabolism; IMP biosynthesis via de novo pathway; 5-formamido-1-(5-phospho-D-ribosyl)imidazole-4-carboxamide from 5-amino-1-(5-phospho-D-ribosyl)imidazole-4-carboxamide (10-formyl THF route): step 1/1. Its pathway is purine metabolism; IMP biosynthesis via de novo pathway; IMP from 5-formamido-1-(5-phospho-D-ribosyl)imidazole-4-carboxamide: step 1/1. The polypeptide is Bifunctional purine biosynthesis protein PurH (Mycobacterium marinum (strain ATCC BAA-535 / M)).